The following is a 535-amino-acid chain: Dimethylaniline monooxygenase [N-oxide-forming] 2 (535 aa).

Position 2 is an N-acetylalanine (Ala-2). Residues 9–13, Glu-32, 40–41, and 61–62 contribute to the FAD site; these read GAGVS, VW, and NT. Residues 60-61 and 195-198 contribute to the NADP(+) site; these read TN and SGSD. Residue Lys-492 forms a Glycyl lysine isopeptide (Lys-Gly) (interchain with G-Cter in SUMO) linkage. A helical membrane pass occupies residues 510 to 530; sequence FSVSFLLKILGLLAVVVAFFC.

Belongs to the FMO family. It depends on FAD as a cofactor. Requires Mg(2+) as cofactor.

It localises to the microsome membrane. Its subcellular location is the endoplasmic reticulum membrane. Catalyzes the oxidative metabolism of numerous xenobiotics, including mainly therapeutic drugs and insecticides that contain a soft nucleophile, most commonly nitrogen and sulfur and participates to their bioactivation. This Pan troglodytes (Chimpanzee) protein is Dimethylaniline monooxygenase [N-oxide-forming] 2.